The primary structure comprises 202 residues: ATP-dependent Clp protease proteolytic subunit 1 (202 aa).

Catalysis depends on Ser99, which acts as the Nucleophile. His123 is a catalytic residue.

It belongs to the peptidase S14 family. In terms of assembly, fourteen ClpP subunits assemble into 2 heptameric rings which stack back to back to give a disk-like structure with a central cavity, resembling the structure of eukaryotic proteasomes.

It localises to the cytoplasm. The catalysed reaction is Hydrolysis of proteins to small peptides in the presence of ATP and magnesium. alpha-casein is the usual test substrate. In the absence of ATP, only oligopeptides shorter than five residues are hydrolyzed (such as succinyl-Leu-Tyr-|-NHMec, and Leu-Tyr-Leu-|-Tyr-Trp, in which cleavage of the -Tyr-|-Leu- and -Tyr-|-Trp bonds also occurs).. Cleaves peptides in various proteins in a process that requires ATP hydrolysis. Has a chymotrypsin-like activity. Plays a major role in the degradation of misfolded proteins. This chain is ATP-dependent Clp protease proteolytic subunit 1, found in Symbiobacterium thermophilum (strain DSM 24528 / JCM 14929 / IAM 14863 / T).